A 339-amino-acid polypeptide reads, in one-letter code: Heat-inducible transcription repressor HrcA (339 aa).

The protein belongs to the HrcA family.

Negative regulator of class I heat shock genes (grpE-dnaK-dnaJ and groELS operons). Prevents heat-shock induction of these operons. The chain is Heat-inducible transcription repressor HrcA from Leifsonia xyli subsp. xyli (strain CTCB07).